Consider the following 1052-residue polypeptide: uncharacterized protein (1052 aa).

A Helicase ATP-binding domain is found at 389-561; the sequence is WINKGKTFAI…NKGGNYIMIN (173 aa). Position 400–407 (400–407) interacts with ATP; sequence SAMGTGKT.

The protein belongs to the mimivirus R1 family.

This is an uncharacterized protein from Acanthamoeba polyphaga mimivirus (APMV).